Reading from the N-terminus, the 62-residue chain is Cryptic Mu-phage protein com (62 aa).

Belongs to the com family.

The chain is Cryptic Mu-phage protein com from Shigella dysenteriae.